Here is a 332-residue protein sequence, read N- to C-terminus: Leucine carboxyl methyltransferase 1 (332 aa).

Residues 1–23 form a disordered region; that stretch reads MAASLRRPSFTTCSSPTDTDDEG. S-adenosyl-L-methionine contacts are provided by residues Arg-71, Gly-96, Asp-120, 169–170, and Glu-196; that span reads DL.

It belongs to the methyltransferase superfamily. LCMT family.

The catalysed reaction is [phosphatase 2A protein]-C-terminal L-leucine + S-adenosyl-L-methionine = [phosphatase 2A protein]-C-terminal L-leucine methyl ester + S-adenosyl-L-homocysteine. Functionally, methylates the carboxyl group of the C-terminal leucine residue of protein phosphatase 2A catalytic subunits to form alpha-leucine ester residues. The sequence is that of Leucine carboxyl methyltransferase 1 (LCMT1) from Bos taurus (Bovine).